Consider the following 339-residue polypeptide: Glyceraldehyde-3-phosphate dehydrogenase (339 aa).

NAD(+) contacts are provided by residues 12–13 (RI), aspartate 34, and lysine 79. D-glyceraldehyde 3-phosphate contacts are provided by residues 150–152 (SCT), threonine 181, 210–211 (TG), and arginine 233. Catalysis depends on cysteine 151, which acts as the Nucleophile. Asparagine 316 contributes to the NAD(+) binding site.

This sequence belongs to the glyceraldehyde-3-phosphate dehydrogenase family. Homotetramer.

It localises to the cytoplasm. The enzyme catalyses D-glyceraldehyde 3-phosphate + phosphate + NAD(+) = (2R)-3-phospho-glyceroyl phosphate + NADH + H(+). The protein operates within carbohydrate degradation; glycolysis; pyruvate from D-glyceraldehyde 3-phosphate: step 1/5. This chain is Glyceraldehyde-3-phosphate dehydrogenase (GPD), found in Cryptococcus neoformans var. neoformans serotype D (strain B-3501A) (Filobasidiella neoformans).